We begin with the raw amino-acid sequence, 308 residues long: MSVGVAVLGSGNIGTDLMIKVLRLSDSLRMVAMAGIDSGSDGLARARRLGVTTTADGVAGLVTLPEFADVELVFDATSAGAHRHHDSVLRAYGRIVVDLTPAAIGPYVVPPVNLDEHLAETNVNMVTCGGQATVPIVAAIGRVTPVAYGEIVASIASKSAGPGTRANIDEFTETTARAIEVVGGADRGKAIIVLNPADPPLLMRDTVYCLCPDTDADRSAIIAAVTDMVGAVQEYVPGYRLKQEVQFDRVDSYLPALGGHLTGLQVSVFLEVSGAGHYLPEYAGNLDIMTSAALRTAERLIGRRAVTA.

An NAD(+)-binding site is contributed by 10 to 13; it reads SGNI. The Acyl-thioester intermediate role is filled by C128. Residues 159–167 and N285 contribute to the NAD(+) site; that span reads SAGPGTRAN.

This sequence belongs to the acetaldehyde dehydrogenase family.

The catalysed reaction is acetaldehyde + NAD(+) + CoA = acetyl-CoA + NADH + H(+). The sequence is that of Acetaldehyde dehydrogenase 1 from Salinispora arenicola (strain CNS-205).